Reading from the N-terminus, the 104-residue chain is uncharacterized protein (104 aa).

The first 23 residues, 1-23, serve as a signal peptide directing secretion; the sequence is MDIHDYVELIALAFWVISVVSVG.

This is an uncharacterized protein from Lactobacillus helveticus (Lactobacillus suntoryeus).